Here is a 326-residue protein sequence, read N- to C-terminus: Siroheme decarboxylase NirDL subunit (326 aa).

It belongs to the Ahb/Nir family. In terms of assembly, forms a complex composed of NirDL, NirG and NirH. All proteins are required for the total conversion of siroheme to didecarboxysiroheme.

The catalysed reaction is siroheme + 2 H(+) = 12,18-didecarboxysiroheme + 2 CO2. The protein operates within porphyrin-containing compound metabolism. Its function is as follows. Involved in heme d1 biosynthesis. Catalyzes the decarboxylation of siroheme into didecarboxysiroheme. Siroheme is probably decarboxylated to monodecarboxysiroheme, which is in turn decarboxylated to didecarboxysiroheme. The chain is Siroheme decarboxylase NirDL subunit from Paracoccus pantotrophus (Thiosphaera pantotropha).